The chain runs to 448 residues: tRNA(Ile)-lysidine synthase (448 aa).

27–32 (SGGVDS) serves as a coordination point for ATP.

The protein belongs to the tRNA(Ile)-lysidine synthase family.

The protein resides in the cytoplasm. It carries out the reaction cytidine(34) in tRNA(Ile2) + L-lysine + ATP = lysidine(34) in tRNA(Ile2) + AMP + diphosphate + H(+). Ligates lysine onto the cytidine present at position 34 of the AUA codon-specific tRNA(Ile) that contains the anticodon CAU, in an ATP-dependent manner. Cytidine is converted to lysidine, thus changing the amino acid specificity of the tRNA from methionine to isoleucine. The sequence is that of tRNA(Ile)-lysidine synthase from Vibrio campbellii (strain ATCC BAA-1116).